The following is a 560-amino-acid chain: Platelet glycoprotein V (560 aa).

An N-terminal signal peptide occupies residues Met1 to Ala16. Residues Gln17–Thr50 form the LRRNT domain. The Extracellular portion of the chain corresponds to Gln17 to Gly523. Asn51 is a glycosylation site (N-linked (GlcNAc...) asparagine). 13 LRR repeats span residues Val75–Asp96, Lys99–Lys120, Leu123–Lys144, Asn147–Asn168, Asn171–Gln193, Lys195–Ser216, Ala219–Arg240, Asn243–His264, Asn267–Glu288, Gly291–Asn312, Glu340–Gly361, Lys364–Asn385, and Ser388–Ala409. A glycan (N-linked (GlcNAc...) (complex) asparagine) is linked at Asn181. An N-linked (GlcNAc...) (complex) asparagine glycan is attached at Asn243. N-linked (GlcNAc...) asparagine glycosylation is found at Asn267, Asn298, and Asn312. Asn385 is a glycosylation site (N-linked (GlcNAc...) asparagine). An LRRCT domain is found at Asn421–Gly474. Residues Asp469 to Pro498 form a disordered region. A glycan (N-linked (GlcNAc...) asparagine) is linked at Asn499. The chain crosses the membrane as a helical span at residues Phe524–Ile544. At Lys545–Gly560 the chain is on the cytoplasmic side.

The N-terminus is blocked. As to expression, platelets and megakaryocytes.

Its subcellular location is the membrane. In terms of biological role, the GPIb-V-IX complex functions as the vWF receptor and mediates vWF-dependent platelet adhesion to blood vessels. The adhesion of platelets to injured vascular surfaces in the arterial circulation is a critical initiating event in hemostasis. The protein is Platelet glycoprotein V (GP5) of Homo sapiens (Human).